The primary structure comprises 185 residues: Ribosome-recycling factor (185 aa).

A disordered region spans residues 139–159; the sequence is IDSLEKDGDVSGDEADRAKKK. A compositionally biased stretch (basic and acidic residues) spans 141–159; sequence SLEKDGDVSGDEADRAKKK.

It belongs to the RRF family.

The protein localises to the cytoplasm. Functionally, responsible for the release of ribosomes from messenger RNA at the termination of protein biosynthesis. May increase the efficiency of translation by recycling ribosomes from one round of translation to another. The protein is Ribosome-recycling factor of Sorangium cellulosum (strain So ce56) (Polyangium cellulosum (strain So ce56)).